A 266-amino-acid polypeptide reads, in one-letter code: 3-methyl-2-oxobutanoate hydroxymethyltransferase (266 aa).

Residues D45 and D84 each coordinate Mg(2+). 3-methyl-2-oxobutanoate contacts are provided by residues D45–S46, D84, and K112. E114 contacts Mg(2+). E181 acts as the Proton acceptor in catalysis.

Belongs to the PanB family. Homodecamer; pentamer of dimers. Requires Mg(2+) as cofactor.

The protein localises to the cytoplasm. The enzyme catalyses 3-methyl-2-oxobutanoate + (6R)-5,10-methylene-5,6,7,8-tetrahydrofolate + H2O = 2-dehydropantoate + (6S)-5,6,7,8-tetrahydrofolate. It functions in the pathway cofactor biosynthesis; (R)-pantothenate biosynthesis; (R)-pantoate from 3-methyl-2-oxobutanoate: step 1/2. Catalyzes the reversible reaction in which hydroxymethyl group from 5,10-methylenetetrahydrofolate is transferred onto alpha-ketoisovalerate to form ketopantoate. The sequence is that of 3-methyl-2-oxobutanoate hydroxymethyltransferase from Pseudomonas syringae pv. tomato (strain ATCC BAA-871 / DC3000).